A 371-amino-acid polypeptide reads, in one-letter code: Cytochrome b (371 aa).

4 helical membrane passes run 25–45 (FGSMLLACLALQVLTGFFLAV), 69–90 (WMMQNLHAIGASMFFICIYIHI), 105–125 (WMSGITLLITLMATAFFGYVL), and 170–190 (FFALHFILPFAIISMSSLHII). Heme b-binding residues include histidine 75 and histidine 89. Residues histidine 174 and histidine 188 each contribute to the heme b site. An a ubiquinone-binding site is contributed by histidine 193. 4 consecutive transmembrane segments (helical) span residues 218 to 238 (YKDLLFLTLMILFMLIIVSFF), 280 to 300 (LGGALALVMSIMILFIIPFTH), 312 to 332 (LSQLMFWTLVSTFITITWAAT), and 339 to 358 (YIIISQVTATLYFIFFISMP).

It belongs to the cytochrome b family. The cytochrome bc1 complex contains 3 respiratory subunits (MT-CYB, CYC1 and UQCRFS1), 2 core proteins (UQCRC1 and UQCRC2) and probably 6 low-molecular weight proteins. It depends on heme b as a cofactor.

The protein localises to the mitochondrion inner membrane. In terms of biological role, component of the ubiquinol-cytochrome c reductase complex (complex III or cytochrome b-c1 complex) that is part of the mitochondrial respiratory chain. The b-c1 complex mediates electron transfer from ubiquinol to cytochrome c. Contributes to the generation of a proton gradient across the mitochondrial membrane that is then used for ATP synthesis. This Python molurus (Indian python) protein is Cytochrome b (MT-CYB).